The primary structure comprises 1107 residues: Ubiquitin-associated protein 2-like (1107 aa).

Residue M1 is modified to N-acetylmethionine. Residues 1-33 (MMTSVGTNRARGNWEQPQNQNQTQHKQRPQATA) are disordered. Residues 49-89 (DFEEKVKQLIDITGKNQDECVIALHDCNGDVNRAINVLLEG) enclose the UBA domain. The interval 92-229 (DTHSWEMVGK…NTWNNTGHFE (138 aa)) is disordered. Residues 118–132 (EEGKENRDRDRDYSR) are compositionally biased toward basic and acidic residues. A compositionally biased stretch (basic residues) spans 133–145 (RRGGPPRRGRGAS). Asymmetric dimethylarginine occurs at positions 187 and 190. A compositionally biased stretch (low complexity) spans 213-226 (NYGNSSGNTWNNTG). Residues S376, S380, and S436 each carry the phosphoserine modification. Position 445 is a phosphothreonine (T445). Disordered stretches follow at residues 461–513 (AVAT…KKTS), 550–676 (SDYE…IPSL), and 689–814 (ANQH…LPPG). 5 positions are modified to phosphoserine: S474, S487, S490, S491, and S497. Composition is skewed to low complexity over residues 494–505 (QSSSPQPAQQKL) and 554–589 (STPT…SQES). The span at 590-656 (GYQSGPIQST…TQLQTTQSVE (67 aa)) shows a compositional bias: polar residues. Phosphoserine is present on residues S624, S625, S628, and S629. The span at 665–675 (SESPSTSSIPS) shows a compositional bias: low complexity. Residues 689–713 (ANQHSSSLSGLSHTEEIPNTTTTQH) show a composition bias toward polar residues. The span at 714–804 (SSALSTQQNT…STRSSVATTS (91 aa)) shows a compositional bias: low complexity. S872 and S879 each carry phosphoserine. Disordered regions lie at residues 885–921 (FGRG…LNPA) and 1060–1107 (QQPH…WGAN). Composition is skewed to low complexity over residues 893–916 (PAPA…TQQT) and 1073–1087 (QDGQ…QTSS). Over residues 1088–1107 (IPQKPQTNKSAYNSYSWGAN) the composition is skewed to polar residues.

As to quaternary structure, interacts with BMI1. Part of a complex consisting of UBAP2L, BMI1 and RNF2. Interacts with G3BP1 (via NTF2 domain); promoting stress granule formation.

Its subcellular location is the nucleus. It localises to the chromosome. It is found in the cytoplasm. The protein resides in the stress granule. Functionally, recruits the ubiquitination machinery to RNA polymerase II for polyubiquitination, removal and degradation, when the transcription-coupled nucleotide excision repair (TC-NER) machinery fails to resolve DNA damage. Plays an important role in the activity of long-term repopulating hematopoietic stem cells (LT-HSCs). Is a regulator of stress granule assembly, required for their efficient formation. Required for proper brain development and neocortex lamination. The polypeptide is Ubiquitin-associated protein 2-like (Mus musculus (Mouse)).